The sequence spans 457 residues: Alkylcitrate synthase phiJ (457 aa).

Residues histidine 328 and aspartate 384 contribute to the active site.

This sequence belongs to the citrate synthase family.

It catalyses the reaction (2E,10E)-dode-2,10-dicenoyl-CoA + oxaloacetate + H2O = (4E,11E)-2-hydroxytrideca-4,11-dien-1,2,3-tricarboxylate + CoA + H(+). It participates in secondary metabolite biosynthesis. Its function is as follows. Alkylcitrate synthase; part of the gene cluster that mediates the biosynthesis of the antihypercholesterolemic agents phomoidrides which are dimeric anhydrides. Within the pathway, the alkylcitrate synthase (ACS) phiJ and the alkylcitrate dehydratase (ACDH) phiI produce the decarboxylated monomeric anhydrides by coupling the C12-fatty acyl product from phiA with oxalacetic acid. The pathway begins with the highly reducing polyketide synthase phiA that catalyzes the formation of a C12-fatty acyl-ACP, starting from one acetate and 5 malonate units. The hydrolase phiM is involved in the release of the C12-fatty acyl chain from phiA. The alkylcitrate synthase (ACS) phiJ and the alkylcitrate dehydratase (ACDH) phiI then give rise to decarboxylated monomeric anhydrides by coupling the C12-fatty acyl chain with oxalacetic acid. The cyclase phiC is responsible for the dimerization of the monomeric anhydrides which leads to the production of prephomoidride that contains the characteristic bicyclo[4.3.1]deca-1,6-diene system of phomoidrides. Iterative oxidation catalyzed by the alpha-ketoglutarate-dependent dioxygenase phiK produced then phomoidride A. Finally, the methyltransferase phiE converts phomoidride A to phomoidride B via an acetalization reaction. The phosphatidylethanolamine-binding protein phiB and phiN are not essential for dimerization and their functions have still to be determined. The protein is Alkylcitrate synthase phiJ of Fungal sp. (strain ATCC 74256).